Reading from the N-terminus, the 566-residue chain is Beta-1,2-xylosyltransferease XAX1 (566 aa).

Residues 1–25 (MTSTAYSRPSKLPGGGNGSDRRLPP) form a disordered region. The Cytoplasmic portion of the chain corresponds to 1–43 (MTSTAYSRPSKLPGGGNGSDRRLPPRLMRGLTTKIEPKKLGVG). The helical; Signal-anchor for type II membrane protein transmembrane segment at 44–64 (LLAGCCLALLTYVSLAKLFAI) threads the bilayer. The Lumenal portion of the chain corresponds to 65–566 (YSPVFASTAN…LLQALDRLQQ (502 aa)). N74 carries N-linked (GlcNAc...) asparagine glycosylation. The tract at residues 78 to 180 (LMQNSPPSSP…AAGGDTKIKC (103 aa)) is disordered. Over residues 84-94 (PSSPETGPIPP) the composition is skewed to pro residues. Residues N104, N368, N429, N515, and N549 are each glycosylated (N-linked (GlcNAc...) asparagine).

This sequence belongs to the glycosyltransferase 61 family. In terms of tissue distribution, highly expressed in young panicles.

The protein localises to the golgi apparatus membrane. It participates in glycan metabolism. Its function is as follows. Glycosyltransferase involved in the xylosylation of xylan, the major hemicellulose (non-cellulosic component) of primary and secondary walls of angiosperms. Possesses beta-1,2-xylosyltransferase activity, transferring xylose from UDP-xylose to the xylan backbone. The polypeptide is Beta-1,2-xylosyltransferease XAX1 (Oryza sativa subsp. japonica (Rice)).